We begin with the raw amino-acid sequence, 414 residues long: Serine/threonine transporter SstT (414 aa).

The next 8 membrane-spanning stretches (helical) occupy residues 16–36, 46–66, 84–104, 143–163, 180–200, 219–239, 300–320, and 332–352; these read GSLV…AWIS, LGTL…LMLV, ILFL…VFSF, ALLN…GFAL, AVTF…FGLV, LVVL…LLVF, MAGA…TLGV, and VVAS…LLLI.

It belongs to the dicarboxylate/amino acid:cation symporter (DAACS) (TC 2.A.23) family.

It is found in the cell inner membrane. It carries out the reaction L-serine(in) + Na(+)(in) = L-serine(out) + Na(+)(out). The enzyme catalyses L-threonine(in) + Na(+)(in) = L-threonine(out) + Na(+)(out). Involved in the import of serine and threonine into the cell, with the concomitant import of sodium (symport system). The chain is Serine/threonine transporter SstT from Salmonella heidelberg (strain SL476).